Reading from the N-terminus, the 745-residue chain is Junction plakoglobin (745 aa).

Position 1 is an N-acetylmethionine (Met-1). O-linked (GlcNAc) threonine glycosylation is present at Thr-14. Phosphoserine is present on residues Ser-99 and Ser-125. 12 ARM repeats span residues 132–171 (NYQDDAELATRALPELTKLLNDEDPVVVTKAAMIVNQLSK), 172–215 (KEAS…LSHH), 216–255 (REGLLAIFKSGGIPALVRMLSSPVESVLFYAITTLHNLLL), 258–297 (EGAKMAVRLADGLQKMVPLLNKNNPKFLAITTDCLQLLAY), 298–341 (GNQE…LSVC), 342–381 (PSNKPAIVEAGGMQALGKHLTSNSPRLVQNCLWTLRNLSD), 383–420 (ATKQEGLESVLKILVNQLSVDDVNVLTCATGTLSNLTC), 423–464 (SKNK…HLTS), 470–510 (EMAQ…NLAL), 512–551 (PANHAPLQEAAVIPRLVQLLVKAHQDAQRHVAAGTQQPYT), 574–613 (PMNRMEIFRLNTIPLFVQLLYSSVENIQRVAAGVLCELAQ), and 615–661 (KEAA…PDYR). Residues 132 to 297 (NYQDDAELAT…TTDCLQLLAY (166 aa)) form an interaction with DSC1 and DSG1 region. Ser-182 is subject to Phosphoserine. The interaction with DSC1 stretch occupies residues 574 to 661 (PMNRMEIFRL…ISEDKNPDYR (88 aa)). Phosphoserine is present on residues Ser-665 and Ser-730.

This sequence belongs to the beta-catenin family. As to quaternary structure, homodimer. Component of an E-cadherin/catenin adhesion complex composed of at least E-cadherin/CDH1 and gamma-catenin/JUP, and possibly alpha-catenin/CTNNA1; the complex is located to adherens junctions. The stable association of CTNNA1 is controversial as CTNNA1 was shown not to bind to F-actin when assembled in the complex. Interacts with MUC1. Interacts with CAV1. Interacts with PTPRJ. Interacts with DSG1. Interacts with DSC1 and DSC2. Interacts with PKP2. Interacts with PKP3 (via N-terminus); the interaction is required for PKP3 localization to desmosome cell-cell junctions. Interacts with DSG4. In terms of processing, may be phosphorylated by FER. In terms of tissue distribution, expressed in the heart (at protein level).

The protein resides in the cell junction. Its subcellular location is the adherens junction. It localises to the desmosome. The protein localises to the cytoplasm. It is found in the cytoskeleton. The protein resides in the cell membrane. Its subcellular location is the nucleus. Functionally, common junctional plaque protein. The membrane-associated plaques are architectural elements in an important strategic position to influence the arrangement and function of both the cytoskeleton and the cells within the tissue. The presence of plakoglobin in both the desmosomes and in the intermediate junctions suggests that it plays a central role in the structure and function of submembranous plaques. Acts as a substrate for VE-PTP and is required by it to stimulate VE-cadherin function in endothelial cells. Can replace beta-catenin in E-cadherin/catenin adhesion complexes which are proposed to couple cadherins to the actin cytoskeleton. The sequence is that of Junction plakoglobin from Homo sapiens (Human).